Reading from the N-terminus, the 449-residue chain is Glucose-6-phosphate isomerase (449 aa).

Catalysis depends on Glu-290, which acts as the Proton donor. Residues His-311 and Lys-425 contribute to the active site.

This sequence belongs to the GPI family.

It localises to the cytoplasm. The catalysed reaction is alpha-D-glucose 6-phosphate = beta-D-fructose 6-phosphate. The protein operates within carbohydrate biosynthesis; gluconeogenesis. It functions in the pathway carbohydrate degradation; glycolysis; D-glyceraldehyde 3-phosphate and glycerone phosphate from D-glucose: step 2/4. Catalyzes the reversible isomerization of glucose-6-phosphate to fructose-6-phosphate. The chain is Glucose-6-phosphate isomerase from Clostridioides difficile (strain 630) (Peptoclostridium difficile).